Consider the following 428-residue polypeptide: Putative UPF0496 protein 5 (428 aa).

A compositionally biased stretch (basic residues) spans methionine 1–alanine 14. The tract at residues methionine 1–cysteine 40 is disordered. A compositionally biased stretch (acidic residues) spans alanine 22–glycine 31. 2 helical membrane-spanning segments follow: residues isoleucine 229–alanine 249 and proline 252–methionine 272.

Belongs to the UPF0496 family.

It is found in the membrane. In Oryza sativa subsp. indica (Rice), this protein is Putative UPF0496 protein 5.